The primary structure comprises 114 residues: Large ribosomal subunit protein bL19 (114 aa).

Belongs to the bacterial ribosomal protein bL19 family.

Its function is as follows. This protein is located at the 30S-50S ribosomal subunit interface and may play a role in the structure and function of the aminoacyl-tRNA binding site. The chain is Large ribosomal subunit protein bL19 from Acidithiobacillus ferrooxidans (strain ATCC 23270 / DSM 14882 / CIP 104768 / NCIMB 8455) (Ferrobacillus ferrooxidans (strain ATCC 23270)).